A 268-amino-acid chain; its full sequence is Tryptophan synthase alpha chain (268 aa).

Active-site proton acceptor residues include glutamate 49 and aspartate 60.

Belongs to the TrpA family. In terms of assembly, tetramer of two alpha and two beta chains.

It catalyses the reaction (1S,2R)-1-C-(indol-3-yl)glycerol 3-phosphate + L-serine = D-glyceraldehyde 3-phosphate + L-tryptophan + H2O. It participates in amino-acid biosynthesis; L-tryptophan biosynthesis; L-tryptophan from chorismate: step 5/5. The alpha subunit is responsible for the aldol cleavage of indoleglycerol phosphate to indole and glyceraldehyde 3-phosphate. In Xanthomonas euvesicatoria pv. vesicatoria (strain 85-10) (Xanthomonas campestris pv. vesicatoria), this protein is Tryptophan synthase alpha chain.